Consider the following 54-residue polypeptide: Ovomucoid (54 aa).

Positions 4–54 (VDCSDHPKPVCSLEYMPLCGSDSKTYSNKCDFCNAVVESNGTLTLSHFGKC) constitute a Kazal-like domain. Disulfide bonds link C6–C36, C14–C33, and C22–C54. N43 is a glycosylation site (N-linked (GlcNAc...) asparagine).

Its subcellular location is the secreted. The chain is Ovomucoid from Rhea americana (Greater rhea).